A 206-amino-acid polypeptide reads, in one-letter code: Imidazoleglycerol-phosphate dehydratase (206 aa).

Residues 1–21 form a disordered region; it reads MTALDSSRLLQPRTASVHRRT.

This sequence belongs to the imidazoleglycerol-phosphate dehydratase family.

The protein resides in the cytoplasm. The catalysed reaction is D-erythro-1-(imidazol-4-yl)glycerol 3-phosphate = 3-(imidazol-4-yl)-2-oxopropyl phosphate + H2O. Its pathway is amino-acid biosynthesis; L-histidine biosynthesis; L-histidine from 5-phospho-alpha-D-ribose 1-diphosphate: step 6/9. The protein is Imidazoleglycerol-phosphate dehydratase of Synechococcus sp. (strain JA-2-3B'a(2-13)) (Cyanobacteria bacterium Yellowstone B-Prime).